Here is a 179-residue protein sequence, read N- to C-terminus: Interleukin-10 (179 aa).

Positions 1–19 are cleaved as a signal peptide; the sequence is MPSSSALLCCLVFLAGVAA. Cystine bridges form between Cys31-Cys127 and Cys81-Cys133. N-linked (GlcNAc...) asparagine glycosylation occurs at Asn135.

This sequence belongs to the IL-10 family. In terms of assembly, homodimer. Interacts with IL10RA and IL10RB.

The protein resides in the secreted. Functionally, major immune regulatory cytokine that acts on many cells of the immune system where it has profound anti-inflammatory functions, limiting excessive tissue disruption caused by inflammation. Mechanistically, IL10 binds to its heterotetrameric receptor comprising IL10RA and IL10RB leading to JAK1 and STAT2-mediated phosphorylation of STAT3. In turn, STAT3 translocates to the nucleus where it drives expression of anti-inflammatory mediators. Targets antigen-presenting cells (APCs) such as macrophages and monocytes and inhibits their release of pro-inflammatory cytokines including granulocyte-macrophage colony-stimulating factor /GM-CSF, granulocyte colony-stimulating factor/G-CSF, IL-1 alpha, IL-1 beta, IL-6, IL-8 and TNF-alpha. Also interferes with antigen presentation by reducing the expression of MHC-class II and co-stimulatory molecules, thereby inhibiting their ability to induce T cell activation. In addition, controls the inflammatory response of macrophages by reprogramming essential metabolic pathways including mTOR signaling. This is Interleukin-10 (IL10) from Bubalus carabanensis (Swamp type water buffalo).